Reading from the N-terminus, the 240-residue chain is Myogenic factor 6 (240 aa).

One can recognise a bHLH domain in the interval 91–142 (DRRKAATLRERRRLKKINEAFEALKRRTVANPNQRLPKVEILRSAINYIERL).

In terms of assembly, efficient DNA binding requires dimerization with another bHLH protein. In terms of tissue distribution, skeletal muscle.

The protein localises to the nucleus. In terms of biological role, involved in muscle differentiation (myogenic factor). Induces fibroblasts to differentiate into myoblasts. Probable sequence specific DNA-binding protein. This is Myogenic factor 6 (myf6) from Xenopus laevis (African clawed frog).